We begin with the raw amino-acid sequence, 290 residues long: 33 kDa chaperonin (290 aa).

2 disulfide bridges follow: C235/C237 and C268/C271.

It belongs to the HSP33 family. In terms of processing, under oxidizing conditions two disulfide bonds are formed involving the reactive cysteines. Under reducing conditions zinc is bound to the reactive cysteines and the protein is inactive.

The protein localises to the cytoplasm. Functionally, redox regulated molecular chaperone. Protects both thermally unfolding and oxidatively damaged proteins from irreversible aggregation. Plays an important role in the bacterial defense system toward oxidative stress. This Streptococcus pneumoniae (strain CGSP14) protein is 33 kDa chaperonin.